The following is a 612-amino-acid chain: Bifunctional lycopene cyclase/phytoene synthase (612 aa).

Positions Met-1–Asn-268 are lycopene beta-cyclase. Transmembrane regions (helical) follow at residues Trp-3–Val-23, Leu-31–Leu-51, Leu-112–Ser-130, Ile-148–Gly-168, Gly-171–Ile-191, Asn-203–Leu-223, and Ile-246–Cys-266. Residues Thr-275–Lys-612 are phytoene synthase.

It in the N-terminal section; belongs to the lycopene beta-cyclase family. In the C-terminal section; belongs to the phytoene/squalene synthase family.

The protein localises to the membrane. The enzyme catalyses all-trans-lycopene = gamma-carotene. The catalysed reaction is gamma-carotene = all-trans-beta-carotene. It carries out the reaction 2 (2E,6E,10E)-geranylgeranyl diphosphate = 15-cis-phytoene + 2 diphosphate. The protein operates within carotenoid biosynthesis; beta-carotene biosynthesis. Its pathway is carotenoid biosynthesis; phytoene biosynthesis; all-trans-phytoene from geranylgeranyl diphosphate: step 1/1. Its function is as follows. Bifunctional enzyme; part of the car gene cluster that mediates the biosynthesis of neurosporaxanthin, a carboxylic apocarotenoid acting as an essential protective pigments and leading to orange pigmentation. CarAR catalyzes the first step of the pathway by converting geranylgeranyl diphosphate to phytoene, as well as the later cyclization step that transforms the carB product lycopene into gamma-carotene. CarAR also converts part of gamma-carotene into beta-carotene. Neurosporaxanthin is synthesized from geranyl-geranyl pyrophosphate (GGPP) through several enzymatic activities. Phytoene synthase activity performed by the bifunctional enzyme carAR first produces phytoene from geranyl-geranyl pyrophosphate (GGPP). The phytoene dehydrogenase carB then introduces 4 desaturations to lead to lycopene which is substrate of the carotene cyclase activity of carAR that leads to the production of gamma-carotene. CarB then performs a 5th desaturation reaction to yield torulene. Torulene is the substrate of the dioxidase carT that breaks the molecule, removing five carbon atoms to yield beta-apo-4'-carotenal, whereas the aldehyde dehydrogenase carD mediates the last step by converting beta-apo-4'-carotenal into neurosporaxanthin. The chain is Bifunctional lycopene cyclase/phytoene synthase from Fusarium fujikuroi (Bakanae and foot rot disease fungus).